Consider the following 649-residue polypeptide: Acid beta-fructofuranosidase (649 aa).

At 1–22 the chain is on the cytoplasmic side; it reads MEHHKPLLPTSSHAAPTSSTRK. Residues 1 to 101 constitute a propeptide, removed in mature form; it reads MEHHKPLLPT…NLLFAGEGGA (101 aa). A helical; Signal-anchor for type II membrane protein transmembrane segment spans residues 23-43; the sequence is DLLFVLCGLLFLSSLVAYGGY. At 44–649 the chain is on the lumenal side; it reads RASGVPHAHL…PFPFNPDQKS (606 aa). The tract at residues 52-75 is disordered; sequence HLSSPTSNHQQDHQSPTSLPSSKW. Residues 54-72 are compositionally biased toward polar residues; that stretch reads SSPTSNHQQDHQSPTSLPS. Substrate is bound by residues 127–130, Q146, W154, and 189–190; these read WMND and WT. D130 is a catalytic residue. N210 carries an N-linked (GlcNAc...) (complex) asparagine glycan. 253–254 lines the substrate pocket; sequence RD. N275 is a glycosylation site (N-linked (GlcNAc...) (complex) asparagine). Substrate is bound by residues E308 and D341. C498 and C546 are joined by a disulfide. The N-linked (GlcNAc...) (high mannose) asparagine glycan is linked to N618.

It belongs to the glycosyl hydrolase 32 family. As to quaternary structure, present in two forms, a 70 kDa monomer and a heterodimer of the 30 kDa and 38 kDa subunits. The ratio of the levels of the two forms within cells appears to be regulated developmentally.

The protein localises to the membrane. The protein resides in the vacuole lumen. The catalysed reaction is Hydrolysis of terminal non-reducing beta-D-fructofuranoside residues in beta-D-fructofuranosides.. Its pathway is glycan biosynthesis; sucrose metabolism. Possible role in the continued mobilization of sucrose to sink organs. The sequence is that of Acid beta-fructofuranosidase (INVA) from Vigna radiata var. radiata (Mung bean).